Here is a 298-residue protein sequence, read N- to C-terminus: Acetyl-coenzyme A carboxylase carboxyl transferase subunit beta (298 aa).

Positions 26–295 constitute a CoA carboxyltransferase N-terminal domain; sequence LWIKCPETGE…DNANAVVPLA (270 aa).

It belongs to the AccD/PCCB family. Acetyl-CoA carboxylase is a heterohexamer composed of biotin carboxyl carrier protein (AccB), biotin carboxylase (AccC) and two subunits each of ACCase subunit alpha (AccA) and ACCase subunit beta (AccD).

Its subcellular location is the cytoplasm. The enzyme catalyses N(6)-carboxybiotinyl-L-lysyl-[protein] + acetyl-CoA = N(6)-biotinyl-L-lysyl-[protein] + malonyl-CoA. It participates in lipid metabolism; malonyl-CoA biosynthesis; malonyl-CoA from acetyl-CoA: step 1/1. Its function is as follows. Component of the acetyl coenzyme A carboxylase (ACC) complex. Biotin carboxylase (BC) catalyzes the carboxylation of biotin on its carrier protein (BCCP) and then the CO(2) group is transferred by the transcarboxylase to acetyl-CoA to form malonyl-CoA. The chain is Acetyl-coenzyme A carboxylase carboxyl transferase subunit beta from Agrobacterium fabrum (strain C58 / ATCC 33970) (Agrobacterium tumefaciens (strain C58)).